The following is a 45-amino-acid chain: NLR family pyrin domain-containing protein 2B (45 aa).

In terms of tissue distribution, expressed in all tissues tested, including spleen, lymph node, thymus, tonsil, peripheral blood leukocyte, bone marrow, liver, heart, brain, placenta, lung, skeletal muscle, kidney and pancreas.

The protein resides in the cytoplasm. The protein localises to the nucleus. Functionally, may function as a negative regulator of NF-kappa-B by preventing RELA/p65 phosphorylation at 'Ser-536', thereby inhibiting its transcriptional activity. Through NF-kappa-B regulation may control cytokine release upon Toll-like receptors activation and therefore play a role in modulation of innate immunity. May also play a role in cell cycle progression and apoptotic process. The polypeptide is NLR family pyrin domain-containing protein 2B (Homo sapiens (Human)).